Consider the following 93-residue polypeptide: Large ribosomal subunit protein uL23cy (93 aa).

The protein belongs to the universal ribosomal protein uL23 family. As to quaternary structure, part of the 50S ribosomal subunit.

The protein resides in the plastid. It is found in the chloroplast. Binds to 23S rRNA. In Agrostis stolonifera (Creeping bentgrass), this protein is Large ribosomal subunit protein uL23cy (rpl23-B).